The following is a 366-amino-acid chain: Methyltransferase calH (366 aa).

Residues T189, D216, and 245–246 contribute to the S-adenosyl-L-methionine site; that span reads NA.

The protein belongs to the class I-like SAM-binding methyltransferase superfamily.

It functions in the pathway secondary metabolite biosynthesis. Functionally, methyltransferase; part of the gene cluster that mediates the biosynthesis of calbistrin A and related compounds. Calbistrin A is a secondary metabolite with an interesting structure that was recently found to have bioactivity against leukemia cells. It consists of two polyketides linked by an ester bond: a bicyclic decalin containing polyketide and a linear 12 carbon dioic acid structure. The polyketide synthase calA is probably responsible for forming the decalin moiety. Because calA lacks a designated enoylreductase (ER) domain, the required activity is provided by the trans-enoyl reductase calK. Following release from the PKS, calF then probably catalyzes the oxidation and the subsequent Diels Alder cycloisomerization that lead to the formation of the decalin moiety. The decalin polyketide backbone includes two C-methyl groups, at C7 and C11 in backbone, of which the C7 position is probably methylated by the methyltransferase domain of calA. A candidate for adding the methyl group at C11, if not done by CalA, is the cluster methyltransferase calH. Several additional tailoring enzymes within the cluster could be involved in the modification of the decalin polyketide product. Those include the 3 cytochrome P450 monooxygenases CalE, CalG and CalL, of which one might be responsible for the introduction of the extra hydroxyl group attached to the backbone of the decalin moiety, at position C9 in the backbone, that allows for attachment of the linear moiety. One tailoring enzyme activity that is expected to be involved in biosynthesis of calbistrin is an acyltransferase for connecting the two polyketide synthase products, and which could be performed by the cluster acyltransferase calJ. The enzyme responsible for the biosynthesis of the linear moiety, probably a second PKS, has not been identified yet. This chain is Methyltransferase calH, found in Penicillium decumbens.